A 315-amino-acid polypeptide reads, in one-letter code: Thioredoxin reductase (315 aa).

45–52 (EGSTPGGK) serves as a coordination point for FAD. Cys145 and Cys148 form a disulfide bridge. 288 to 297 (DCRSKHFRQI) provides a ligand contact to FAD.

Belongs to the class-II pyridine nucleotide-disulfide oxidoreductase family. As to quaternary structure, homodimer. FAD is required as a cofactor.

The protein localises to the cytoplasm. The enzyme catalyses [thioredoxin]-dithiol + NADP(+) = [thioredoxin]-disulfide + NADPH + H(+). This chain is Thioredoxin reductase (trxB), found in Mycoplasma pneumoniae (strain ATCC 29342 / M129 / Subtype 1) (Mycoplasmoides pneumoniae).